The chain runs to 97 residues: Sugar transporter SemiSWEET (97 aa).

Residues 4 to 70 (IERIGKALEP…IYGIYHKNPT (67 aa)) enclose the PQ-loop domain. A run of 3 helical transmembrane segments spans residues 15 to 35 (MLVMGLISPLATMPQLYKLYV), 44 to 65 (LSLTTWLLYSFIALLWTIYGIY), and 71 to 91 (IWVGNCLGFLMYVAMVVGIIA).

Homodimer.

The protein resides in the cell membrane. In terms of biological role, the homodimer mediates transmembrane sugar transport down a concentration gradient. Transport is probably effected by rocking-type movements, where a cargo-binding cavity opens first on one and then on the other side of the membrane. In Vibrio sp. (strain N418), this protein is Sugar transporter SemiSWEET.